The chain runs to 235 residues: Large ribosomal subunit protein uL1 (235 aa).

It belongs to the universal ribosomal protein uL1 family. In terms of assembly, part of the 50S ribosomal subunit.

Binds directly to 23S rRNA. The L1 stalk is quite mobile in the ribosome, and is involved in E site tRNA release. In terms of biological role, protein L1 is also a translational repressor protein, it controls the translation of the L11 operon by binding to its mRNA. This chain is Large ribosomal subunit protein uL1, found in Desulfovibrio desulfuricans (strain ATCC 27774 / DSM 6949 / MB).